The following is a 678-amino-acid chain: Sulfoquinovosidase (678 aa).

Residues Q288, R301, V302, and W304 each contribute to the a 6-sulfo-alpha-D-quinovosyldiacylglycerol site. Residue D405 is the Nucleophile of the active site. E408 is an active-site residue. D472 functions as the Proton donor in the catalytic mechanism. H537 contacts a 6-sulfo-alpha-D-quinovosyldiacylglycerol.

The protein belongs to the glycosyl hydrolase 31 family.

It catalyses the reaction a 6-sulfo-alpha-D-quinovosyldiacylglycerol + H2O = 6-sulfo-alpha-D-quinovose + a 1,2-diacyl-sn-glycerol. The catalysed reaction is 3-(6-sulfo-alpha-D-quinovosyl)glycerol + H2O = 6-sulfo-alpha-D-quinovose + glycerol. Its pathway is glycolipid metabolism. Its activity is regulated as follows. Is inactivated in vitro by the mechanism-based inactivator 5-fluoro-beta-L-idopyranosyl fluoride (5FIdoF) that yields a covalent glycosyl-enzyme complex with the active site nucleophile Asp-405. Its function is as follows. Catalyzes the hydrolysis of sulfoquinovosyl diacylglycerides (SQDG) to sulfoquinovose (SQ), which is then degraded by E.coli through the SQ Embden-Meyerhof-Parnas (SQ-EMP) sulfoglycolysis pathway as a source of carbon and sulfur. Therefore, is likely involved in the utilization of the sulfoquinovose headgroup found in ubiquitous plant sulfolipids. Is also able to hydrolyze simple sulfoquinovosides such as sulfoquinovosyl glycerol (SQGro). In vitro, can use the substrate analog para-nitrophenyl alpha-sulfoquinovoside (PNPSQ), but shows no detectable activity toward 4-nitrophenyl alpha-D-glucopyranoside (PNPGlc). Is a retaining glycoside hydrolase, since it forms the alpha anomer of SQ. Also exhibits some alpha-glucosidase activity against alpha-glucosyl fluoride in vitro, although natural substrates, such as alpha-glucobioses are scarcely hydrolyzed. This is Sulfoquinovosidase from Escherichia coli (strain K12).